Here is a 1049-residue protein sequence, read N- to C-terminus: Exotoxin PaxA (1049 aa).

Transmembrane regions (helical) follow at residues 246 to 266 (GLGL…FTLA), 311 to 331 (GPAA…LSFL), 375 to 395 (ITTI…ASAG), and 397 to 417 (LVGA…SGIL). Hemolysin-type calcium-binding repeat units lie at residues 744-761 (KGSK…DDLL), 762-779 (NGND…NDEL), 780-797 (RGDN…NDKL), 798-815 (FGGN…DDEL), 826-843 (RGGK…SDFL), and 844-861 (DGGE…NDFY).

Belongs to the RTX prokaryotic toxin (TC 1.C.11) family.

It is found in the secreted. The protein localises to the host cell membrane. PaxA is associated with abortion cases in swine and septicemia in young piglets. Shows cohemolytic activity with the sphingomyelinase of S.aureus but is devoid of direct hemolytic activity. The chain is Exotoxin PaxA (paxA) from Pasteurella aerogenes.